An 891-amino-acid polypeptide reads, in one-letter code: Mating-type protein A-alpha Z3 (891 aa).

Positions 111–189 (EWQENMPPVP…AARIRIGWTH (79 aa)) form a DNA-binding region, homeobox; TALE-type. Residues 331-360 (AAHEKRQQARREQRQAKNERDAAQMREEQR) are compositionally biased toward basic and acidic residues. 4 disordered regions span residues 331-592 (AAHE…VNWD), 606-671 (YLDS…ASET), 779-812 (SILSTGPKAGITRRQTPPAKRRVSPRAQEPVEPS), and 836-861 (PKKDRRYAERAERRASKANSFDSPDT). Acidic residues-rich tracts occupy residues 369–400 (SSDDEGEDEDDEESTDAYDSEASDSEDDSDSD) and 427–457 (ADDEDEASDDDEDDNVEGDDESEEEEEEEDT). Low complexity-rich tracts occupy residues 542–559 (PSKTTKAPASTSTTKSST) and 612–650 (SSRPQRRASTSSSSSTSSSLSRTPSLTSLSSLSSGSSVS). The segment covering 651 to 660 (TCETVGTDSS) has biased composition (polar residues). The segment covering 841–850 (RYAERAERRA) has biased composition (basic and acidic residues).

Belongs to the TALE/M-ATYP homeobox family.

It is found in the nucleus. Its function is as follows. Specifies A-alpha-3 mating-type. May regulate the expression of genes specific to the homokaryotic cell type. The protein is Mating-type protein A-alpha Z3 of Schizophyllum commune (Split gill fungus).